The chain runs to 390 residues: Protein MalY (390 aa).

The residue at position 233 (Lys233) is an N6-(pyridoxal phosphate)lysine.

This sequence belongs to the class-II pyridoxal-phosphate-dependent aminotransferase family. MalY/PatB cystathionine beta-lyase subfamily. As to quaternary structure, homodimer. Interacts with MalT. Pyridoxal 5'-phosphate is required as a cofactor.

It catalyses the reaction L,L-cystathionine + H2O = L-homocysteine + pyruvate + NH4(+). The enzyme catalyses an S-substituted L-cysteine + H2O = a thiol + pyruvate + NH4(+). In terms of biological role, acts as a beta-cystathionase and as a repressor of the maltose regulon. The polypeptide is Protein MalY (malY) (Escherichia coli (strain K12)).